We begin with the raw amino-acid sequence, 187 residues long: Cytochrome b-245 chaperone 1 (187 aa).

Residues glycine 20–glycine 42 traverse the membrane as a helical segment. At serine 168 the chain carries Phosphoserine.

It belongs to the CYBC1 family. In terms of assembly, interacts with CYBB; CYBC1 may act as a chaperone stabilizing Cytochrome b-245 heterodimer. As to expression, highly expressed in macrophages, neutrophils and monocytes.

The protein localises to the endoplasmic reticulum membrane. Functionally, functions as a chaperone necessary for a stable expression of the CYBA and CYBB subunits of the cytochrome b-245 heterodimer. Controls the phagocyte respiratory burst and is essential for innate immunity. The sequence is that of Cytochrome b-245 chaperone 1 from Homo sapiens (Human).